We begin with the raw amino-acid sequence, 89 residues long: Ixosin-B (89 aa).

A signal peptide spans 1-26 (MASGWTHRLLLLAAVVTLGATPIAAA). A propeptide spanning residues 27 to 57 (SMEYLVTAPGYLTPNADIKITAVVTNPSSAG) is cleaved from the precursor. A disordered region spans residues 68–89 (SGIQPEQHSSGKSDVRRWRSRY). Over residues 76–89 (SSGKSDVRRWRSRY) the composition is skewed to basic and acidic residues.

Its function is as follows. Has antifungal activity against C.albicans. Has antibacterial activity against the Gram-positive bacterium S.aureus and the Gram-negative bacterium E.coli. Lacks hemolytic activity against rabbit erythrocytes. This is Ixosin-B from Ixodes sinensis (Hard tick).